The sequence spans 315 residues: Small ribosomal subunit biogenesis GTPase RsgA (315 aa).

A CP-type G domain is found at 82-246 (DQFKSKVLAA…LIDSPGFQEF (165 aa)). GTP contacts are provided by residues 130–133 (NKID) and 184–192 (GQSGMGKSS). Residues Cys-270, Cys-275, His-277, and Cys-283 each coordinate Zn(2+).

Belongs to the TRAFAC class YlqF/YawG GTPase family. RsgA subfamily. In terms of assembly, monomer. Associates with 30S ribosomal subunit, binds 16S rRNA. Requires Zn(2+) as cofactor.

It is found in the cytoplasm. Its function is as follows. One of several proteins that assist in the late maturation steps of the functional core of the 30S ribosomal subunit. Helps release RbfA from mature subunits. May play a role in the assembly of ribosomal proteins into the subunit. Circularly permuted GTPase that catalyzes slow GTP hydrolysis, GTPase activity is stimulated by the 30S ribosomal subunit. This Ralstonia pickettii (strain 12J) protein is Small ribosomal subunit biogenesis GTPase RsgA.